The chain runs to 138 residues: Cysteine desulfuration protein SufE (138 aa).

The active-site Cysteine persulfide intermediate is the Cys-51.

This sequence belongs to the SufE family. Homodimer. Interacts with SufS.

It localises to the cytoplasm. It functions in the pathway cofactor biosynthesis; iron-sulfur cluster biosynthesis. Its function is as follows. Participates in cysteine desulfuration mediated by SufS. Cysteine desulfuration mobilizes sulfur from L-cysteine to yield L-alanine and constitutes an essential step in sulfur metabolism for biosynthesis of a variety of sulfur-containing biomolecules. Functions as a sulfur acceptor for SufS, by mediating the direct transfer of the sulfur atom from the S-sulfanylcysteine of SufS, an intermediate product of cysteine desulfuration process. In Escherichia coli (strain K12 / MC4100 / BW2952), this protein is Cysteine desulfuration protein SufE.